The chain runs to 151 residues: Large ribosomal subunit protein uL15 (151 aa).

Residues 1 to 60 form a disordered region; sequence MAENNPLKIHNLRPAPGAKTAKTRVGRGEASKGKTAGRGTKGTKARYQVPERFEGGQMPL.

The protein belongs to the universal ribosomal protein uL15 family. Part of the 50S ribosomal subunit.

In terms of biological role, binds to the 23S rRNA. This is Large ribosomal subunit protein uL15 from Streptomyces avermitilis (strain ATCC 31267 / DSM 46492 / JCM 5070 / NBRC 14893 / NCIMB 12804 / NRRL 8165 / MA-4680).